A 363-amino-acid chain; its full sequence is Fructose-bisphosphate aldolase C-B (363 aa).

Residues R56 and K147 each contribute to the substrate site. The active-site Proton acceptor is the E188. Catalysis depends on K230, which acts as the Schiff-base intermediate with dihydroxyacetone-P.

Belongs to the class I fructose-bisphosphate aldolase family. In terms of assembly, homotetramer.

It carries out the reaction beta-D-fructose 1,6-bisphosphate = D-glyceraldehyde 3-phosphate + dihydroxyacetone phosphate. The protein operates within carbohydrate degradation; glycolysis; D-glyceraldehyde 3-phosphate and glycerone phosphate from D-glucose: step 4/4. This chain is Fructose-bisphosphate aldolase C-B (aldocb), found in Danio rerio (Zebrafish).